We begin with the raw amino-acid sequence, 159 residues long: NADH-quinone oxidoreductase subunit I (159 aa).

4Fe-4S ferredoxin-type domains lie at 51-80 (RRYE…IEAD) and 90-119 (TRYD…EGPN). [4Fe-4S] cluster contacts are provided by Cys-60, Cys-63, Cys-66, Cys-70, Cys-99, Cys-102, Cys-105, and Cys-109.

The protein belongs to the complex I 23 kDa subunit family. NDH-1 is composed of 14 different subunits. Subunits NuoA, H, J, K, L, M, N constitute the membrane sector of the complex. [4Fe-4S] cluster is required as a cofactor.

Its subcellular location is the cell membrane. It catalyses the reaction a quinone + NADH + 5 H(+)(in) = a quinol + NAD(+) + 4 H(+)(out). Its function is as follows. NDH-1 shuttles electrons from NADH, via FMN and iron-sulfur (Fe-S) centers, to quinones in the respiratory chain. The immediate electron acceptor for the enzyme in this species is believed to be ubiquinone. Couples the redox reaction to proton translocation (for every two electrons transferred, four hydrogen ions are translocated across the cytoplasmic membrane), and thus conserves the redox energy in a proton gradient. The chain is NADH-quinone oxidoreductase subunit I from Rickettsia africae (strain ESF-5).